The sequence spans 231 residues: ATP phosphoribosyltransferase (231 aa).

This sequence belongs to the ATP phosphoribosyltransferase family. Short subfamily. Heteromultimer composed of HisG and HisZ subunits.

It is found in the cytoplasm. It carries out the reaction 1-(5-phospho-beta-D-ribosyl)-ATP + diphosphate = 5-phospho-alpha-D-ribose 1-diphosphate + ATP. Its pathway is amino-acid biosynthesis; L-histidine biosynthesis; L-histidine from 5-phospho-alpha-D-ribose 1-diphosphate: step 1/9. Catalyzes the condensation of ATP and 5-phosphoribose 1-diphosphate to form N'-(5'-phosphoribosyl)-ATP (PR-ATP). Has a crucial role in the pathway because the rate of histidine biosynthesis seems to be controlled primarily by regulation of HisG enzymatic activity. In Sinorhizobium fredii (strain NBRC 101917 / NGR234), this protein is ATP phosphoribosyltransferase (hisG).